The primary structure comprises 466 residues: Histidine--tRNA ligase (466 aa).

It belongs to the class-II aminoacyl-tRNA synthetase family. As to quaternary structure, homodimer.

Its subcellular location is the cytoplasm. It carries out the reaction tRNA(His) + L-histidine + ATP = L-histidyl-tRNA(His) + AMP + diphosphate + H(+). The chain is Histidine--tRNA ligase from Xylella fastidiosa (strain M12).